We begin with the raw amino-acid sequence, 734 residues long: Transcription factor EMB1444 (734 aa).

A disordered region spans residues 537–566 (QFPTSLEIPKKNKKRAKPGESSRPRPRDRQ). The short motif at 548–555 (NKKRAKPG) is the Nuclear localization signal element. A bHLH domain is found at 552–601 (AKPGESSRPRPRDRQLIQDRIKELRELVPNGSKCSIDSLLECTIKHMLFL). The segment covering 553-566 (KPGESSRPRPRDRQ) has biased composition (basic and acidic residues).

This sequence belongs to the bHLH protein family. LHW subfamily. In terms of assembly, homodimer.

The protein localises to the nucleus. Transcription factor that may regulate root development. The sequence is that of Transcription factor EMB1444 from Arabidopsis thaliana (Mouse-ear cress).